The primary structure comprises 523 residues: Calcium and calcium/calmodulin-dependent serine/threonine-protein kinase DMI-3 (523 aa).

A Protein kinase domain is found at 12–306 (YEVSEILGRG…ALELLSDPWV (295 aa)). Residues 18–26 (LGRGGFSVV) and Lys-47 each bind ATP. Asp-171 acts as the Proton acceptor in catalysis. A Phosphothreonine modification is found at Thr-271. The calmodulin-binding stretch occupies residues 329–342 (ARRKLRAAAIASVW). EF-hand domains are found at residues 400-435 (SLIP…LKNS), 436-471 (KGED…LPYD), and 478-513 (TEPG…DSSL). Residues Asp-413, Asn-415, Asp-417, Thr-419, Glu-424, Asp-449, Asp-451, Ser-453, Cys-455, Glu-460, Asp-491, Asn-493, Asp-495, Lys-497, and Glu-502 each contribute to the Ca(2+) site.

Belongs to the protein kinase superfamily. CAMK Ser/Thr protein kinase family. CaMK subfamily. In terms of assembly, interacts with IPD3. Post-translationally, autophosphorylation. Highly expressed in roots. Expressed in root hairs and nodules. Expressed at low levels in flowers. Not detected in leaves or stems.

The protein localises to the nucleus. The catalysed reaction is L-seryl-[protein] + ATP = O-phospho-L-seryl-[protein] + ADP + H(+). The enzyme catalyses L-threonyl-[protein] + ATP = O-phospho-L-threonyl-[protein] + ADP + H(+). With respect to regulation, activated by calcium. Autophosphorylation may play an important role in the regulation of the kinase activity. Functionally, during nodulation, plays a central role in bacterial infection and contributes to nodule organogenesis. Protein kinase that recognizes the calcium spiking induced by Nod factors and translates this signal to components controlling nodulation and mycorrhizal infection responses. May phosphorylate the NSP1 protein. Required in epidermal and cortical cells to promote infection thread (IT) formation in root hairs. This is Calcium and calcium/calmodulin-dependent serine/threonine-protein kinase DMI-3 from Medicago truncatula (Barrel medic).